Consider the following 349-residue polypeptide: Succinylglutamate desuccinylase (349 aa).

Histidine 70, glutamate 73, and histidine 166 together coordinate Zn(2+). Glutamate 229 is an active-site residue.

This sequence belongs to the AspA/AstE family. Succinylglutamate desuccinylase subfamily. Zn(2+) is required as a cofactor.

The catalysed reaction is N-succinyl-L-glutamate + H2O = L-glutamate + succinate. It participates in amino-acid degradation; L-arginine degradation via AST pathway; L-glutamate and succinate from L-arginine: step 5/5. Transforms N(2)-succinylglutamate into succinate and glutamate. This chain is Succinylglutamate desuccinylase, found in Burkholderia mallei (strain ATCC 23344).